The following is a 197-amino-acid chain: Phosphoheptose isomerase (197 aa).

Residues 34–196 (MVQCLLGGNK…DRTLFPQDDQ (163 aa)) enclose the SIS domain. 49–51 (NGG) is a binding site for substrate. Zn(2+) contacts are provided by His-58 and Glu-62. Substrate-binding positions include Glu-62, 91 to 92 (ND), 117 to 119 (STS), Ser-122, and Gln-172. Gln-172 and His-180 together coordinate Zn(2+).

Belongs to the SIS family. GmhA subfamily. As to quaternary structure, homotetramer. The cofactor is Zn(2+).

Its subcellular location is the cytoplasm. It carries out the reaction 2 D-sedoheptulose 7-phosphate = D-glycero-alpha-D-manno-heptose 7-phosphate + D-glycero-beta-D-manno-heptose 7-phosphate. It participates in carbohydrate biosynthesis; D-glycero-D-manno-heptose 7-phosphate biosynthesis; D-glycero-alpha-D-manno-heptose 7-phosphate and D-glycero-beta-D-manno-heptose 7-phosphate from sedoheptulose 7-phosphate: step 1/1. In terms of biological role, catalyzes the isomerization of sedoheptulose 7-phosphate in D-glycero-D-manno-heptose 7-phosphate. This is Phosphoheptose isomerase from Shewanella loihica (strain ATCC BAA-1088 / PV-4).